The primary structure comprises 295 residues: tRNA pseudouridine synthase A (295 aa).

D67 serves as the catalytic Nucleophile. A substrate-binding site is contributed by Y125.

Belongs to the tRNA pseudouridine synthase TruA family. As to quaternary structure, homodimer.

It carries out the reaction uridine(38/39/40) in tRNA = pseudouridine(38/39/40) in tRNA. Its function is as follows. Formation of pseudouridine at positions 38, 39 and 40 in the anticodon stem and loop of transfer RNAs. The protein is tRNA pseudouridine synthase A of Prochlorococcus marinus (strain MIT 9303).